The sequence spans 142 residues: Large ribosomal subunit protein uL11 (142 aa).

This sequence belongs to the universal ribosomal protein uL11 family. Part of the ribosomal stalk of the 50S ribosomal subunit. Interacts with L10 and the large rRNA to form the base of the stalk. L10 forms an elongated spine to which L12 dimers bind in a sequential fashion forming a multimeric L10(L12)X complex. In terms of processing, one or more lysine residues are methylated.

Forms part of the ribosomal stalk which helps the ribosome interact with GTP-bound translation factors. In Thermobifida fusca (strain YX), this protein is Large ribosomal subunit protein uL11.